An 83-amino-acid polypeptide reads, in one-letter code: Protein ORF5 (83 aa).

This sequence belongs to the microviridae C protein family.

Plays a central role in the packaging of viral DNA into phage procapsid, which occurs in the late stage of infection. Can interact with the replicative complex after the completion of one round of DNA synthesis. When protein ORF5 is bound to the replicative form, the complex becomes accessible to procapsid and serves as a DNA packaging apparatus. This Spiroplasma melliferum (SpV4) protein is Protein ORF5.